The sequence spans 907 residues: Protein MEI2-like 4 (907 aa).

Residues glutamine 28–tyrosine 58 are disordered. Positions arginine 44–threonine 54 are enriched in polar residues. RRM domains follow at residues arginine 211 to proline 284 and glycine 295 to proline 368. The segment at alanine 856 to methionine 907 is disordered. The span at serine 883 to serine 894 shows a compositional bias: polar residues.

In terms of biological role, probable RNA-binding protein that plays a role in meiosis and vegetative growth. The sequence is that of Protein MEI2-like 4 (ML4) from Arabidopsis thaliana (Mouse-ear cress).